The sequence spans 277 residues: Ribosomal RNA small subunit methyltransferase A (277 aa).

S-adenosyl-L-methionine is bound by residues N20, L22, G47, E68, D93, and N114.

It belongs to the class I-like SAM-binding methyltransferase superfamily. rRNA adenine N(6)-methyltransferase family. RsmA subfamily.

Its subcellular location is the cytoplasm. The enzyme catalyses adenosine(1518)/adenosine(1519) in 16S rRNA + 4 S-adenosyl-L-methionine = N(6)-dimethyladenosine(1518)/N(6)-dimethyladenosine(1519) in 16S rRNA + 4 S-adenosyl-L-homocysteine + 4 H(+). Functionally, specifically dimethylates two adjacent adenosines (A1518 and A1519) in the loop of a conserved hairpin near the 3'-end of 16S rRNA in the 30S particle. May play a critical role in biogenesis of 30S subunits. This Aliivibrio salmonicida (strain LFI1238) (Vibrio salmonicida (strain LFI1238)) protein is Ribosomal RNA small subunit methyltransferase A.